The sequence spans 63 residues: Cysteine-rich peptide clone 2 (63 aa).

An N-terminal signal peptide occupies residues 1–23 (MHFSGVVLILLSMTLVNFVFVET). 3 cysteine pairs are disulfide-bonded: cysteine 33–cysteine 53, cysteine 38–cysteine 58, and cysteine 42–cysteine 60.

Expressed by the venom gland.

The protein localises to the secreted. This is Cysteine-rich peptide clone 2 from Tityus costatus (Brazilian scorpion).